Here is a 132-residue protein sequence, read N- to C-terminus: Small ribosomal subunit protein uS8 (132 aa).

It belongs to the universal ribosomal protein uS8 family. As to quaternary structure, part of the 30S ribosomal subunit. Contacts proteins S5 and S12.

Its function is as follows. One of the primary rRNA binding proteins, it binds directly to 16S rRNA central domain where it helps coordinate assembly of the platform of the 30S subunit. In Limosilactobacillus fermentum (strain NBRC 3956 / LMG 18251) (Lactobacillus fermentum), this protein is Small ribosomal subunit protein uS8.